The primary structure comprises 76 residues: Omega-conotoxin-like TxO2 (76 aa).

The signal sequence occupies residues 1–22; sequence MKLTCVVIVAVLFLTAWTFVTA. The propeptide occupies 23 to 52; the sequence is APHSSNALENLYLKAHHEMNNPEDSELNKR. 3 disulfides stabilise this stretch: C53-C67, C60-C71, and C66-C75.

It belongs to the conotoxin O1 superfamily. Expressed by the venom duct.

The protein resides in the secreted. Functionally, omega-conotoxins act at presynaptic membranes, they bind and block voltage-gated calcium channels (Cav). The sequence is that of Omega-conotoxin-like TxO2 from Conus textile (Cloth-of-gold cone).